The sequence spans 154 residues: Ribosome maturation factor RimP (154 aa).

Belongs to the RimP family.

It is found in the cytoplasm. Functionally, required for maturation of 30S ribosomal subunits. In Desulforudis audaxviator (strain MP104C), this protein is Ribosome maturation factor RimP.